Here is a 540-residue protein sequence, read N- to C-terminus: Phosphoenolpyruvate carboxykinase (ATP) (540 aa).

Arginine 65 contributes to the substrate binding site. N6-acetyllysine is present on lysine 87. Tyrosine 207 and lysine 213 together coordinate substrate. Residues lysine 213, histidine 232, and 248–256 (GLSGTGKTT) contribute to the ATP site. Residues lysine 213 and histidine 232 each contribute to the Mn(2+) site. Mn(2+) is bound at residue aspartate 269. Residues glutamate 297, arginine 333, 449–450 (RI), and threonine 455 contribute to the ATP site. Arginine 333 lines the substrate pocket. The residue at position 523 (lysine 523) is an N6-acetyllysine.

The protein belongs to the phosphoenolpyruvate carboxykinase (ATP) family. As to quaternary structure, monomer. Requires Mn(2+) as cofactor.

The protein localises to the cytoplasm. It carries out the reaction oxaloacetate + ATP = phosphoenolpyruvate + ADP + CO2. It participates in carbohydrate biosynthesis; gluconeogenesis. Involved in the gluconeogenesis. Catalyzes the conversion of oxaloacetate (OAA) to phosphoenolpyruvate (PEP) through direct phosphoryl transfer between the nucleoside triphosphate and OAA. The protein is Phosphoenolpyruvate carboxykinase (ATP) of Escherichia fergusonii (strain ATCC 35469 / DSM 13698 / CCUG 18766 / IAM 14443 / JCM 21226 / LMG 7866 / NBRC 102419 / NCTC 12128 / CDC 0568-73).